Here is a 578-residue protein sequence, read N- to C-terminus: E3 ubiquitin protein ligase RIN2 (578 aa).

Transmembrane regions (helical) follow at residues 6 to 26, 58 to 78, 111 to 131, 161 to 181, 186 to 206, and 272 to 292; these read LPVS…WTEL, FTIA…VLSL, LVIP…TVLC, VYSV…LSLM, IGSA…FETL, and YLHI…VLFL. The segment at 337-379 adopts an RING-type; atypical zinc-finger fold; it reads CAICREPMAKAKRLHCNHLFHLGCLRSWLDQGLNEVYSCPTCR. Polar residues predominate over residues 504–513; that stretch reads QASTSSTTVP. The segment at 504-524 is disordered; the sequence is QASTSSTTVPPGNGGRTGGLH. The CUE domain maps to 538–578; sequence NILAMAETVREVMPHVPDEIIFQDLQRTNSVAVTVNNLLQM.

In terms of assembly, interacts (via C-terminus) with RPM1 (via N-terminus).

The protein localises to the membrane. The catalysed reaction is S-ubiquitinyl-[E2 ubiquitin-conjugating enzyme]-L-cysteine + [acceptor protein]-L-lysine = [E2 ubiquitin-conjugating enzyme]-L-cysteine + N(6)-ubiquitinyl-[acceptor protein]-L-lysine.. It functions in the pathway protein modification; protein ubiquitination. In terms of biological role, E3 ubiquitin protein ligase that acts as a positive regulator of RPM1- and RPS2-dependent hypersensitive response (HR), in association with RIN3. Probably not required for RPM1 degradation during HR. This is E3 ubiquitin protein ligase RIN2 (RIN2) from Arabidopsis thaliana (Mouse-ear cress).